Here is a 192-residue protein sequence, read N- to C-terminus: Putative inactive ribonuclease 11 (192 aa).

Residues 1-15 (MAVFLLLLALGLLLA) form the signal peptide. The segment at 21 to 54 (RMKGTTEQFSQEEMQPAAKQTLEESANSTLSDKN) is disordered. The span at 43-54 (EESANSTLSDKN) shows a compositional bias: polar residues. Asn-47 and Asn-104 each carry an N-linked (GlcNAc...) asparagine glycan.

It belongs to the pancreatic ribonuclease family.

The protein resides in the secreted. The protein is Putative inactive ribonuclease 11 (Rnase11) of Mus musculus (Mouse).